The chain runs to 286 residues: Beta-lactamase SHV-29 (286 aa).

The N-terminal stretch at 1–21 (MRYIRLCIISLLATLPLAVHA) is a signal peptide. S66 serves as the catalytic Acyl-ester intermediate. Residues C73 and C119 are joined by a disulfide bond. Catalysis depends on E164, which acts as the Proton acceptor. Position 230–232 (230–232 (KTG)) interacts with substrate.

It belongs to the class-A beta-lactamase family.

The catalysed reaction is a beta-lactam + H2O = a substituted beta-amino acid. The chain is Beta-lactamase SHV-29 (bla) from Klebsiella pneumoniae.